We begin with the raw amino-acid sequence, 492 residues long: Regulatory protein ViaA (492 aa).

This sequence belongs to the ViaA family. Homodimer. Interacts with RavA.

The protein localises to the cytoplasm. Functionally, component of the RavA-ViaA chaperone complex, which may act on the membrane to optimize the function of some of the respiratory chains. ViaA stimulates the ATPase activity of RavA. This Pectobacterium carotovorum subsp. carotovorum (strain PC1) protein is Regulatory protein ViaA.